The sequence spans 380 residues: MTVGYLRPTRILVDQNAIYENIQNELKHLEGTDTVIFPVLKANAYGHGLIPVAEAAQAAGAAGFCVALLDEALALRRANFTEPILVLGITQPSEIELAAANQISLTVGSLEWLQEATAIAQQVPYLHPVPIHLSIDSGMGRIGMRDEAELLAAYTFIKAHSDYFDFEGVFTHFATADDPDDTYFKEQSARFNQLMTALPERPRFVHVSNSATSLWHAACNGNIIRMGISLYGLNPSGNAIPDLPYPLKQALGIESELVFVKQVAAGTKIGYGATYEASEGEWIGTIPMGYADGWLRRMQGSTVLVDGQRCEIVGRICMDQMMIRLPKRYPVGTKVVFVGKSGDDEITLQEVADYADTIHYEIICDLSDRIPRVYTGLNEH.

Lys-41 functions as the Proton acceptor; specific for D-alanine in the catalytic mechanism. Residue Lys-41 is modified to N6-(pyridoxal phosphate)lysine. Arg-141 lines the substrate pocket. Catalysis depends on Tyr-271, which acts as the Proton acceptor; specific for L-alanine. Position 318 (Met-318) interacts with substrate.

Belongs to the alanine racemase family. Pyridoxal 5'-phosphate is required as a cofactor.

The enzyme catalyses L-alanine = D-alanine. Its pathway is amino-acid biosynthesis; D-alanine biosynthesis; D-alanine from L-alanine: step 1/1. Functionally, catalyzes the interconversion of L-alanine and D-alanine. May also act on other amino acids. In Latilactobacillus sakei subsp. sakei (strain 23K) (Lactobacillus sakei subsp. sakei), this protein is Alanine racemase (alr).